The primary structure comprises 350 residues: tRNA dimethylallyltransferase (350 aa).

34–41 (GPTASGKT) is an ATP binding site. 36–41 (TASGKT) lines the substrate pocket. 3 interaction with substrate tRNA regions span residues 63–66 (DSAL), 187–191 (QRIQR), and 274–279 (RCVGYR).

It belongs to the IPP transferase family. In terms of assembly, monomer. Mg(2+) is required as a cofactor.

The catalysed reaction is adenosine(37) in tRNA + dimethylallyl diphosphate = N(6)-dimethylallyladenosine(37) in tRNA + diphosphate. In terms of biological role, catalyzes the transfer of a dimethylallyl group onto the adenine at position 37 in tRNAs that read codons beginning with uridine, leading to the formation of N6-(dimethylallyl)adenosine (i(6)A). This chain is tRNA dimethylallyltransferase, found in Paracidovorax citrulli (strain AAC00-1) (Acidovorax citrulli).